The following is a 1288-amino-acid chain: MTNCEKDEEFVCISCVEEVRYSFVSHLSEALRRKGINNVVVDVDIDDLLFKESQAKIEKAGVSVMVLPGNCDPSEVWLDKFAKVLECQRNNKDQAVVSVLYGDSLLRDQWLSELDFRGLSRIHQSRKECSDSILVEEIVRDVYETHFYVGRIGIYSKLLEIENMVNKQPIGIRCVGIWGMPGIGKTTLAKAVFDQMSSAFDASCFIEDYDKSIHEKGLYCLLEEQLLPGNDATIMKLSSLRDRLNSKRVLVVLDDVRNALVGESFLEGFDWLGPGSLIIITSRDKQVFCLCGINQIYEVQGLNEKEARQLFLLSASIKEDMGEQNLQELSVRVINYANGNPLAISVYGRELKGKKKLSEMETAFLKLKRRPPFKIVDAFKSTYDTLSDNEKNIFLDIACFFQGENVNYVIQLLEGCGFFPHVEIDVLVDKCLVTISENRVWLHKLTQDIGREIINGETVQIERRRRLWEPWSIKYLLEYNEHKANGEPKTTFKRAQGSEEIEGLFLDTSNLRFDLQPSAFKNMLNLRLLKIYCSNPEVHPVINFPTGSLHSLPNELRLLHWENYPLKSLPQNFDPRHLVEINMPYSQLQKLWGGTKNLEMLRTIRLCHSHHLVDIDDLLKAENLEVIDLQGCTRLQNFPAAGRLLRLRVVNLSGCIKIKSVLEIPPNIEKLHLQGTGILALPVSTVKPNHRELVNFLTEIPGLSEELERLTSLLESNSSCQDLGKLICLELKDCSCLQSLPNMANLDLNVLDLSGCSSLNSIQGFPRFLKQLYLGGTAIREVPQLPQSLEILNAHGSCLRSLPNMANLEFLKVLDLSGCSELETIQGFPRNLKELYFAGTTLREVPQLPLSLEVLNAHGSDSEKLPMHYKFNNFFDLSQQVVNDFLLKTLTYVKHIPRGYTQELINKAPTFSFSAPSHTNQNATFDLQSGSSVMTRLNHSWRNTLVGFGMLVEVAFPEDYCDATDVGISCVCRWSNKEGRSCRIERKFHCWAPWQVVPKVRKDHTFVFSDVNMRPSTGEGNDPDIWAGLVVFEFFPINQQTKCLNDRFTVRRCGVRVINVATGNTSLENIALVLSLDPVEVSGYEVLRVSYDDLQEMDKVLFLYIASLFNDEDVDFVAPLIAGIDLDVSSGLKVLADVSLISVSSNGEIVMHSLQRQMGKEILHGQSMLLSDCESSMTENLSDVPKKKKKHSESRVKKVVSIPAIDEGDLWTWRKYGQKDILGSRFPRGYYRCAYKFTHGCKATKQVQRSETDSNMLAITYLSEHNHPRPTKRKALADSTRSTSSSIC.

A TIR domain is found at 5-146 (EKDEEFVCIS…EIVRDVYETH (142 aa)). An important for interaction with RPS4 region spans residues 25-26 (SH). In terms of domain architecture, NB-ARC spans 170 to 421 (IGIRCVGIWG…LLEGCGFFPH (252 aa)). An ATP-binding site is contributed by 179–186 (GMPGIGKT). 12 LRR repeats span residues 498 to 522 (SEEI…AFKN), 535 to 553 (NPEV…HSLP), 554 to 575 (NELR…NFDP), 577 to 598 (HLVE…TKNL), 621 to 646 (AENL…RLLR), 665 to 688 (PPNI…TVKP), 697 to 720 (LTEI…NSSC), 740 to 764 (LPNM…SIQG), 766 to 791 (PRFL…SLEI), 792 to 807 (LNAH…NMAN), 808 to 829 (LEFL…QGFP), and 830 to 852 (RNLK…PLSL). The Nuclear localization signal signature appears at 986-1003 (RKFHCWAPWQVVPKVRKD). Residues 1202–1270 (IPAIDEGDLW…YLSEHNHPRP (69 aa)) constitute a DNA-binding region (WRKY). The interval 1267-1288 (HPRPTKRKALADSTRSTSSSIC) is disordered. Over residues 1279–1288 (STRSTSSSIC) the composition is skewed to polar residues.

Belongs to the disease resistance TIR-NB-LRR family. Interacts with PopP2, a R.solanacearum type III effector. Interacts with RPS4.

The protein resides in the nucleus. It is found in the cytoplasm. Functionally, transcription factor. Interacts specifically with the W box (5'-(T)TGAC[CT]-3'), a frequently occurring elicitor-responsive cis-acting element. Also acts as a disease resistance protein involved in resistance to fungal and bacterial pathogens, including R.solanacearum, P.syringae pv. tomato and C.higginsianum. Heterodimerization with RPS4 is required to form a functional complex to recognize AvrRps4 and PopP2. Contributes to temperature-conditioned RPS4 auto-immunity. In Arabidopsis thaliana (Mouse-ear cress), this protein is Disease resistance protein RRS1.